Consider the following 769-residue polypeptide: Ligand-dependent nuclear receptor-interacting factor 1 (769 aa).

Glycyl lysine isopeptide (Lys-Gly) (interchain with G-Cter in SUMO2) cross-links involve residues lysine 259 and lysine 279. A compositionally biased stretch (polar residues) spans 378-387; it reads QIDQQNSVSP. Residues 378 to 400 form a disordered region; the sequence is QIDQQNSVSPDTPVRKDTLQTVS. Phosphoserine is present on residues serine 402, serine 430, and serine 436. Lysine 446 is covalently cross-linked (Glycyl lysine isopeptide (Lys-Gly) (interchain with G-Cter in SUMO2)). Serine 502 bears the Phosphoserine mark. The interval 528–562 is disordered; that stretch reads DQEPKIHNEMASTSDKGAQGRNDKKDSQGRSNKAL. Residues 580–584 carry the PxVxL motif motif; sequence LRVCL. The residue at position 599 (serine 599) is a Phosphoserine. Lysine 605 is covalently cross-linked (Glycyl lysine isopeptide (Lys-Gly) (interchain with G-Cter in SUMO2)). Short sequence motifs (nuclear localization signal) lie at residues 628–631 and 642–645; these read KKRK. A Glycyl lysine isopeptide (Lys-Gly) (interchain with G-Cter in SUMO2) cross-link involves residue lysine 702. The residue at position 732 (threonine 732) is a Phosphothreonine. Residues 740 to 769 are a coiled coil; sequence IRDEKIRRLKQVLREKEAALEEMRKKMHQK.

Belongs to the LRIF1 family. As to quaternary structure, interacts with RARA. Interacts with SMCHD1; leading to recruitment to inactivated chromosome X in females. Interacts (via PxVxL motif) with HP1 (CBX1/HP1-beta, CBX3/HP1-gamma and CBX5/HP1-alpha). As to expression, widely expressed, with the highest expression levels in heart, liver and placenta.

It is found in the chromosome. It localises to the nucleus matrix. In terms of biological role, together with SMCHD1, involved in chromosome X inactivation in females by promoting the compaction of heterochromatin. Also able to repress the ligand-induced transcriptional activity of retinoic acid receptor alpha (RARA), possibly through direct recruitment of histone deacetylases. Also required for silencing of the DUX4 locus in somatic cells. The polypeptide is Ligand-dependent nuclear receptor-interacting factor 1 (Homo sapiens (Human)).